We begin with the raw amino-acid sequence, 89 residues long: Gamma-bungarotoxin (89 aa).

A signal peptide spans 1-21; it reads MKTLLLTLVVVTIVCLDLGYT. Cystine bridges form between Cys24–Cys45, Cys27–Cys32, Cys38–Cys66, Cys70–Cys81, and Cys82–Cys87. The short motif at 54-56 is the Cell attachment site element; the sequence is RGD.

The protein belongs to the three-finger toxin family. Ancestral subfamily. Orphan group V sub-subfamily. Expressed by the venom gland.

It is found in the secreted. Its function is as follows. Exhibits M2 muscarinic acetylcholine receptor (CHRM2)-blocking activity, but has a weak binding activity toward nicotinic AChR. Moreover, it inhibits collagen-induced platelet aggregation. In Bungarus multicinctus (Many-banded krait), this protein is Gamma-bungarotoxin.